The following is a 418-amino-acid chain: Elongation factor 1-gamma 2 (418 aa).

Residues 1–82 (MALVLHAGSG…YVTRSKADNP (82 aa)) form the GST N-terminal domain. The GST C-terminal domain maps to 87–215 (SLIEYAHIEQ…VKQAESVPPV (129 aa)). Positions 210–265 (ESVPPVQKKAPPPKEQKPKEAKKEAPKEAPKPKAVEKPEEEEEAPKPKPKNPLDLL) are disordered. The segment covering 221-246 (PPKEQKPKEAKKEAPKEAPKPKAVEK) has biased composition (basic and acidic residues). Positions 258–418 (PKNPLDLLPP…ESLLDAKCFK (161 aa)) constitute an EF-1-gamma C-terminal domain.

In terms of assembly, EF-1 is composed of four subunits: alpha, beta, delta, and gamma.

Probably plays a role in anchoring the complex to other cellular components. This chain is Elongation factor 1-gamma 2, found in Oryza sativa subsp. japonica (Rice).